Consider the following 1081-residue polypeptide: Probable cellulose synthase A catalytic subunit 8 [UDP-forming] (1081 aa).

The Cytoplasmic portion of the chain corresponds to 1 to 277; it reads MDGDADAVKS…PSSRINPYRM (277 aa). Zn(2+) is bound by residues cysteine 19, cysteine 22, cysteine 38, cysteine 41, cysteine 46, cysteine 49, cysteine 61, and cysteine 64. The RING-type; degenerate zinc finger occupies 19–65; the sequence is CQICGDGVGTTAEGDVFAACDVCGFPVCRPCYEYERKDGTQACPQCK. Positions 72–148 are disordered; that stretch reads KGSPAIRGEE…YDSGEIPRGY (77 aa). Positions 81–91 are enriched in acidic residues; sequence EGEDTDADDVS. Residues 103–112 are compositionally biased toward basic and acidic residues; sequence QKQKIADRMR. A helical membrane pass occupies residues 278 to 298; the sequence is VIVLRLVVLSIFLHYRITNPV. Topologically, residues 299 to 300 are extracellular; the sequence is RN. The helical transmembrane segment at 301 to 321 threads the bilayer; the sequence is AYPLWLLSVICEIWFALSWIL. At 322-864 the chain is on the cytoplasmic side; that stretch reads DQFPKWFPIN…INTTIYPLTS (543 aa). The UDP-alpha-D-glucose site is built by serine 360, lysine 366, glutamate 367, and aspartate 396. Aspartate 396 is an active-site residue. Positions 450–477 form a coiled coil; the sequence is VKDRRAMKREYEEFKVRINGLVAKAQKV. Residue lysine 537 participates in UDP-alpha-D-glucose binding. Residues lysine 538 and aspartate 562 each coordinate Mn(2+). The tract at residues 660-684 is disordered; that stretch reads SLCGGRKKASKSKKKSSDKKKSNKH. Over residues 664–682 the composition is skewed to basic residues; that stretch reads GRKKASKSKKKSSDKKKSN. Aspartate 781 is an active-site residue. Residues 865–885 form a helical membrane-spanning segment; that stretch reads IPLLIYCVLPAICLLTGKFII. Topologically, residues 886 to 890 are extracellular; it reads PEISN. Residues 891–911 traverse the membrane as a helical segment; it reads FASIWFISLFISIFATGILEM. Over 912-926 the chain is Cytoplasmic; it reads RWSGVGIDEWWRNEQ. A helical membrane pass occupies residues 927–947; the sequence is FWVIGGISAHLFAVFQGLLKV. At 948–977 the chain is on the extracellular side; the sequence is LAGIDTNFTVTSKASDEDGDFAELYMFKWT. N-linked (GlcNAc...) asparagine glycosylation is present at asparagine 954. A helical membrane pass occupies residues 978–998; sequence TLLIPPTTILIINLVGVVAGI. The Cytoplasmic segment spans residues 999-1009; sequence SYAINSGYQSW. Residues 1010–1030 form a helical membrane-spanning segment; sequence GPLFGKLFFAFWVIVHLYPFL. Residues 1031–1039 lie on the Extracellular side of the membrane; that stretch reads KGLMGRQNR. Residues 1040–1060 form a helical membrane-spanning segment; the sequence is TPTIVVVWAILLASIFSLLWV. Topologically, residues 1061–1081 are cytoplasmic; it reads RIDPFTTRVTGPDTQTCGINC.

The protein belongs to the glycosyltransferase 2 family. Plant cellulose synthase subfamily. It depends on Mn(2+) as a cofactor. The cofactor is Zn(2+).

It localises to the cell membrane. It carries out the reaction [(1-&gt;4)-beta-D-glucosyl](n) + UDP-alpha-D-glucose = [(1-&gt;4)-beta-D-glucosyl](n+1) + UDP + H(+). It participates in glycan metabolism; plant cellulose biosynthesis. Its function is as follows. Probable catalytic subunit of cellulose synthase terminal complexes ('rosettes'), required for beta-1,4-glucan microfibril crystallization, a major mechanism of the cell wall formation. The protein is Probable cellulose synthase A catalytic subunit 8 [UDP-forming] (CESA8) of Oryza sativa subsp. japonica (Rice).